The primary structure comprises 444 residues: Tol-Pal system protein TolB (444 aa).

Positions 1-19 (MRNIIYFILSLLFSVTSYA) are cleaved as a signal peptide.

The protein belongs to the TolB family. The Tol-Pal system is composed of five core proteins: the inner membrane proteins TolA, TolQ and TolR, the periplasmic protein TolB and the outer membrane protein Pal. They form a network linking the inner and outer membranes and the peptidoglycan layer.

The protein resides in the periplasm. In terms of biological role, part of the Tol-Pal system, which plays a role in outer membrane invagination during cell division and is important for maintaining outer membrane integrity. This is Tol-Pal system protein TolB from Rickettsia conorii (strain ATCC VR-613 / Malish 7).